A 43-amino-acid chain; its full sequence is Omega-agatoxin-Aa3c (43 aa).

3 disulfide bridges follow: cysteine 2/cysteine 19, cysteine 9/cysteine 25, and cysteine 27/cysteine 38.

This sequence belongs to the neurotoxin 04 (omega-agtx) family. 03 (type II/III omega-agtx) subfamily. As to expression, expressed by the venom gland.

It localises to the secreted. Omega-agatoxins are antagonists of voltage-gated calcium channels (Cav). The sequence is that of Omega-agatoxin-Aa3c from Agelenopsis aperta (North American funnel-web spider).